Consider the following 251-residue polypeptide: Uridylate kinase (251 aa).

Residue 24-27 (KISG) coordinates ATP. Residues 32 to 37 (GDQGFG) form an involved in allosteric activation by GTP region. Residue Gly-66 participates in UMP binding. ATP is bound by residues Gly-67 and Arg-71. UMP-binding positions include Asp-86 and 147 to 154 (TGNPYFTT). ATP is bound by residues Asn-175, Tyr-181, and Asp-184.

Belongs to the UMP kinase family. In terms of assembly, homohexamer.

The protein localises to the cytoplasm. The catalysed reaction is UMP + ATP = UDP + ADP. It functions in the pathway pyrimidine metabolism; CTP biosynthesis via de novo pathway; UDP from UMP (UMPK route): step 1/1. Allosterically activated by GTP. Inhibited by UTP. Its function is as follows. Catalyzes the reversible phosphorylation of UMP to UDP. In Ruegeria pomeroyi (strain ATCC 700808 / DSM 15171 / DSS-3) (Silicibacter pomeroyi), this protein is Uridylate kinase.